We begin with the raw amino-acid sequence, 121 residues long: MSEIQDYNSSVSDPSSRKFETFSYLPELGVEKIRKQVEYIVSKGWNPAVEHTEPENAFDHYWYMWKLPMFGETDVDAILAEAEACHKAHPSHHVRLIGYDNYAQSQGTAMVIFRGPISAKC.

This sequence belongs to the RuBisCO small chain family. Heterohexadecamer of 8 large and 8 small subunits.

Functionally, ruBisCO catalyzes two reactions: the carboxylation of D-ribulose 1,5-bisphosphate, the primary event in carbon dioxide fixation, as well as the oxidative fragmentation of the pentose substrate. Both reactions occur simultaneously and in competition at the same active site. Although the small subunit is not catalytic it is essential for maximal activity. In Alvinoconcha hessleri symbiotic bacterium, this protein is Ribulose bisphosphate carboxylase small subunit.